The following is a 231-amino-acid chain: Flagellar L-ring protein (231 aa).

The signal sequence occupies residues 1-18 (MNRLMIVSLLGIATALGG). Cysteine 19 is lipidated: N-palmitoyl cysteine. The S-diacylglycerol cysteine moiety is linked to residue cysteine 19. Positions 118-141 (LSLSAEYGGSRDAKGDSQAGQSNS) are disordered.

It belongs to the FlgH family. The basal body constitutes a major portion of the flagellar organelle and consists of four rings (L,P,S, and M) mounted on a central rod.

It localises to the cell outer membrane. Its subcellular location is the bacterial flagellum basal body. In terms of biological role, assembles around the rod to form the L-ring and probably protects the motor/basal body from shearing forces during rotation. This is Flagellar L-ring protein from Pseudomonas aeruginosa (strain LESB58).